The sequence spans 162 residues: Proepiregulin (162 aa).

The signal sequence occupies residues 1 to 22; sequence METFPAAWVLALLCLGSHLLQA. A propeptide spanning residues 23-55 is cleaved from the precursor; it reads VISTTVIPSCIPEESEDNCTALVQMEDDPRVAQ. An N-linked (GlcNAc...) asparagine glycan is attached at asparagine 40. The EGF-like domain maps to 57 to 97; that stretch reads LITKCSSDMDGYCLHGHCIYLVDMSEKYCRCEVGYTGLRCE. Disulfide bonds link cysteine 61/cysteine 74, cysteine 69/cysteine 85, and cysteine 87/cysteine 96. The propeptide at 102-162 is removed in mature form; sequence TVHQPLSREY…TSGGPGLPQV (61 aa). Residues 113 to 133 traverse the membrane as a helical segment; that stretch reads ALTVILVFLFLIVTAGSMYYF.

In terms of assembly, interacts with EGFR and ERBB4.

It is found in the secreted. The protein localises to the extracellular space. The protein resides in the cell membrane. Its function is as follows. Ligand of the EGF receptor/EGFR and ERBB4. Stimulates EGFR and ERBB4 tyrosine phosphorylation. Contributes to inflammation, wound healing, tissue repair, and oocyte maturation by regulating angiogenesis and vascular remodeling and by stimulating cell proliferation. This is Proepiregulin (Ereg) from Rattus norvegicus (Rat).